We begin with the raw amino-acid sequence, 477 residues long: 3-isopropylmalate dehydratase large subunit (477 aa).

3 residues coordinate [4Fe-4S] cluster: Cys352, Cys413, and Cys416.

The protein belongs to the aconitase/IPM isomerase family. LeuC type 1 subfamily. As to quaternary structure, heterodimer of LeuC and LeuD. [4Fe-4S] cluster serves as cofactor.

It catalyses the reaction (2R,3S)-3-isopropylmalate = (2S)-2-isopropylmalate. Its pathway is amino-acid biosynthesis; L-leucine biosynthesis; L-leucine from 3-methyl-2-oxobutanoate: step 2/4. In terms of biological role, catalyzes the isomerization between 2-isopropylmalate and 3-isopropylmalate, via the formation of 2-isopropylmaleate. The chain is 3-isopropylmalate dehydratase large subunit from Pseudomonas putida (strain W619).